A 455-amino-acid chain; its full sequence is Pup--protein ligase (455 aa).

Residue E12 participates in Mg(2+) binding. Position 56 (R56) interacts with ATP. Y58 lines the Mg(2+) pocket. The Proton acceptor role is filled by D60. E66 provides a ligand contact to Mg(2+). ATP-binding residues include T69 and W422.

Belongs to the Pup ligase/Pup deamidase family. Pup-conjugating enzyme subfamily.

The enzyme catalyses ATP + [prokaryotic ubiquitin-like protein]-L-glutamate + [protein]-L-lysine = ADP + phosphate + N(6)-([prokaryotic ubiquitin-like protein]-gamma-L-glutamyl)-[protein]-L-lysine.. Its pathway is protein degradation; proteasomal Pup-dependent pathway. The protein operates within protein modification; protein pupylation. Catalyzes the covalent attachment of the prokaryotic ubiquitin-like protein modifier Pup to the proteasomal substrate proteins, thereby targeting them for proteasomal degradation. This tagging system is termed pupylation. The ligation reaction involves the side-chain carboxylate of the C-terminal glutamate of Pup and the side-chain amino group of a substrate lysine. The sequence is that of Pup--protein ligase from Acidimicrobium ferrooxidans (strain DSM 10331 / JCM 15462 / NBRC 103882 / ICP).